A 470-amino-acid chain; its full sequence is Putative gustatory receptor 28b (470 aa).

The Cytoplasmic segment spans residues methionine 1 to threonine 76. The helical transmembrane segment at isoleucine 77 to threonine 97 threads the bilayer. The Extracellular portion of the chain corresponds to isoleucine 98–aspartate 119. The chain crosses the membrane as a helical span at residues leucine 120–proline 140. The Cytoplasmic portion of the chain corresponds to asparagine 141–tyrosine 175. The chain crosses the membrane as a helical span at residues methionine 176–leucine 196. Residues tyrosine 197 to threonine 204 are Extracellular-facing. The helical transmembrane segment at methionine 205–phenylalanine 225 threads the bilayer. The Cytoplasmic portion of the chain corresponds to serine 226–glutamine 309. A helical transmembrane segment spans residues leucine 310–glutamate 330. Over threonine 331–glutamate 346 the chain is Extracellular. A helical transmembrane segment spans residues phenylalanine 347–glutamate 367. Residues glycine 368–arginine 423 lie on the Cytoplasmic side of the membrane. Residues threonine 424 to threonine 444 form a helical membrane-spanning segment. The Extracellular segment spans residues serine 445–leucine 470. N-linked (GlcNAc...) asparagine glycans are attached at residues asparagine 454, asparagine 464, and asparagine 467.

Belongs to the insect chemoreceptor superfamily. Gustatory receptor (GR) family. Gr66a subfamily. Isoforms A and E have taste neuron-specific expression restricted to the labial palps, the internal taste organs in the pharynx, and the legs. In addition to expression in a large number of taste neurons, isoform A is also expressed in a few nonchemosensory neurons, including the campaniform sensilla of the wing, leg stretch receptors, and multiple dendritic neurons in the abdomen. Isoform B is the only receptor not expressed in gustatory receptor neurons in the labellum. We observe expression of this receptor in a single large cell at the base of each maxillary palp, in campaniform sensilla of the wing, and multiple dendritic neurons in the abdomen. Isoform C is expressed by many gustatory receptor neurons in the labial palps, the pharyngeal taste clusters, and taste neurons in the legs. In addition, isoform C expressed in a single cell at the base of the maxillary palps, neurons in the Johnston's organ (JO), campaniform sensilla of the wing, stretch receptors and the femoral chordotonal organ of the legs, and multiple dendritic neurons in the abdomen. Isoform D is expressed in a small number of gustatory receptor neurons in the labial palps, the ventral cibarial sense organ (VCSO), and legs. Atypical expression is observed in three neurons in the arista, campaniform sensilla of the wing, stretch and femoral chordotonal organ receptors in the legs, and multiple dendritic neurons in the abdomen. In larvae, Isoform A is expressed in neurons of the terminal external chemosensory organ and the dorsal external chemosensory organ; and isoform E is expressed in neurons of the terminal external chemosensory organ.

It localises to the cell membrane. Its function is as follows. Probable gustatory receptor which mediates acceptance or avoidance behavior, depending on its substrates. Atypical expression also suggests nongustatory roles in the nervous system and tissues involved in proprioception, hygroreception, and other sensory modalities. It is also possible that it has chemosensory roles in the detection of internal ligands. The chain is Putative gustatory receptor 28b (Gr28b) from Drosophila melanogaster (Fruit fly).